A 125-amino-acid chain; its full sequence is Small ribosomal subunit protein bS6 (125 aa).

The segment at 101–125 (PMMKEEKAKNLLAPQSDAAEPTAAA) is disordered.

It belongs to the bacterial ribosomal protein bS6 family.

In terms of biological role, binds together with bS18 to 16S ribosomal RNA. This is Small ribosomal subunit protein bS6 from Laribacter hongkongensis (strain HLHK9).